The sequence spans 459 residues: Putrescine aminotransferase (459 aa).

Pyridoxal 5'-phosphate contacts are provided by residues glycine 150–threonine 151 and glutamine 274. Lysine 300 is subject to N6-(pyridoxal phosphate)lysine. Residue threonine 332 participates in pyridoxal 5'-phosphate binding.

It belongs to the class-III pyridoxal-phosphate-dependent aminotransferase family. Putrescine aminotransferase subfamily. It depends on pyridoxal 5'-phosphate as a cofactor.

It catalyses the reaction an alkane-alpha,omega-diamine + 2-oxoglutarate = an omega-aminoaldehyde + L-glutamate. It carries out the reaction putrescine + 2-oxoglutarate = 1-pyrroline + L-glutamate + H2O. The enzyme catalyses cadaverine + 2-oxoglutarate = 5-aminopentanal + L-glutamate. Its pathway is amine and polyamine degradation; putrescine degradation; 4-aminobutanal from putrescine (transaminase route): step 1/1. Catalyzes the aminotransferase reaction from putrescine to 2-oxoglutarate, leading to glutamate and 4-aminobutanal, which spontaneously cyclizes to form 1-pyrroline. This is the first step in one of two pathways for putrescine degradation, where putrescine is converted into 4-aminobutanoate (gamma-aminobutyrate or GABA) via 4-aminobutanal. Also functions as a cadaverine transaminase in a a L-lysine degradation pathway to succinate that proceeds via cadaverine, glutarate and L-2-hydroxyglutarate. The chain is Putrescine aminotransferase from Salmonella heidelberg (strain SL476).